The chain runs to 955 residues: Glycine dehydrogenase (decarboxylating) (955 aa).

K702 is modified (N6-(pyridoxal phosphate)lysine).

The protein belongs to the GcvP family. The glycine cleavage system is composed of four proteins: P, T, L and H. Requires pyridoxal 5'-phosphate as cofactor.

The enzyme catalyses N(6)-[(R)-lipoyl]-L-lysyl-[glycine-cleavage complex H protein] + glycine + H(+) = N(6)-[(R)-S(8)-aminomethyldihydrolipoyl]-L-lysyl-[glycine-cleavage complex H protein] + CO2. Its function is as follows. The glycine cleavage system catalyzes the degradation of glycine. The P protein binds the alpha-amino group of glycine through its pyridoxal phosphate cofactor; CO(2) is released and the remaining methylamine moiety is then transferred to the lipoamide cofactor of the H protein. This is Glycine dehydrogenase (decarboxylating) from Stenotrophomonas maltophilia (strain K279a).